Here is a 113-residue protein sequence, read N- to C-terminus: Cell cycle protein GpsB (113 aa).

The stretch at leucine 32 to alanine 71 forms a coiled coil.

The protein belongs to the GpsB family. As to quaternary structure, forms polymers through the coiled coil domains. Interacts with PBP1, MreC and EzrA.

It localises to the cytoplasm. Functionally, divisome component that associates with the complex late in its assembly, after the Z-ring is formed, and is dependent on DivIC and PBP2B for its recruitment to the divisome. Together with EzrA, is a key component of the system that regulates PBP1 localization during cell cycle progression. Its main role could be the removal of PBP1 from the cell pole after pole maturation is completed. Also contributes to the recruitment of PBP1 to the division complex. Not essential for septum formation. The polypeptide is Cell cycle protein GpsB (Lactiplantibacillus plantarum (strain ATCC BAA-793 / NCIMB 8826 / WCFS1) (Lactobacillus plantarum)).